The primary structure comprises 128 residues: UPF0325 protein PMI2289 (128 aa).

Belongs to the UPF0325 family.

The sequence is that of UPF0325 protein PMI2289 from Proteus mirabilis (strain HI4320).